A 385-amino-acid chain; its full sequence is tRNA N6-adenosine threonylcarbamoyltransferase (385 aa).

A divalent metal cation is bound by residues histidine 140, histidine 144, and tyrosine 161. Substrate-binding positions include 161-165, aspartate 193, glycine 208, glutamate 212, and asparagine 314; that span reads YVSGG. Aspartate 343 serves as a coordination point for a divalent metal cation.

This sequence belongs to the KAE1 / TsaD family. As to quaternary structure, component of the EKC/KEOPS complex composed of at least BUD32, CGI121, GON7, KAE1 and PCC1; the whole complex dimerizes. Requires a divalent metal cation as cofactor.

It localises to the cytoplasm. The protein resides in the nucleus. It carries out the reaction L-threonylcarbamoyladenylate + adenosine(37) in tRNA = N(6)-L-threonylcarbamoyladenosine(37) in tRNA + AMP + H(+). In terms of biological role, component of the EKC/KEOPS complex that is required for the formation of a threonylcarbamoyl group on adenosine at position 37 (t(6)A37) in tRNAs that read codons beginning with adenine. The complex is probably involved in the transfer of the threonylcarbamoyl moiety of threonylcarbamoyl-AMP (TC-AMP) to the N6 group of A37. KAE1 likely plays a direct catalytic role in this reaction, but requires other protein(s) of the complex to fulfill this activity. The EKC/KEOPS complex also promotes both telomere uncapping and telomere elongation. The complex is required for efficient recruitment of transcriptional coactivators. The polypeptide is tRNA N6-adenosine threonylcarbamoyltransferase (Eremothecium gossypii (strain ATCC 10895 / CBS 109.51 / FGSC 9923 / NRRL Y-1056) (Yeast)).